The following is a 96-amino-acid chain: Transcriptional regulator ATRY (96 aa).

The GATA-type; atypical zinc finger occupies 1 to 12 (VICTACGQQVNQ). The ADD domain maps to 1–96 (VICTACGQQV…IAVCDSVLEN (96 aa)). The segment at 27 to 82 (LICKRWCAEGGNLICCDSCHNAFCKKCIWRNLGRKEISKIMNEKNEWHCYICCPEP) adopts a PHD-type; atypical zinc-finger fold.

It belongs to the SNF2/RAD54 helicase family. Expressed in developing and adult testis. Also weakly expressed in prostate and epididymis.

Its subcellular location is the nucleus. It carries out the reaction ATP + H2O = ADP + phosphate + H(+). In terms of biological role, could be a global transcriptional regulator. Modifies gene expression by affecting chromatin. The sequence is that of Transcriptional regulator ATRY (ATRY) from Notamacropus eugenii (Tammar wallaby).